The primary structure comprises 317 residues: Zinc metalloproteinase/disintegrin (317 aa).

The propeptide occupies 1–26 (EAPKMCGVTQNWESYEPIKKASQSNL). Residues 32–228 (RYIELVIVAD…QKPQCILNKP (197 aa)) form the Peptidase M12B domain. Residues E35 and D119 each contribute to the Ca(2+) site. Cystine bridges form between C143/C223, C183/C207, and C185/C190. Residue H168 participates in Zn(2+) binding. E169 is an active-site residue. H172 and H178 together coordinate Zn(2+). Residues C223 and N226 each contribute to the Ca(2+) site. A propeptide spanning residues 229–244 (LRTDTVSTPVSGNELL) is cleaved from the precursor. The region spanning 236–317 (TPVSGNELLE…AGCPRNPFHA (82 aa)) is the Disintegrin domain. Intrachain disulfides connect C250–C259, C252–C260, C265–C279, C273–C303, C278–C282, and C291–C310. The Cell attachment site motif lies at 295-297 (RGD).

It belongs to the venom metalloproteinase (M12B) family. P-II subfamily. P-IIa sub-subfamily. Monomer. Zn(2+) is required as a cofactor. Expressed by the venom gland.

It localises to the secreted. Functionally, metalloproteinase that impairs hemostasis in the envenomed animal. In terms of biological role, inhibits GPIIb/GPIIIa (ITGA2B/ITGB3) binding to immobilized fibrinogen with an IC(50) of 2.2 nM and ADP-induced platelet aggregation with an IC(50) of 131 nM, respectively. Inhibits angiogenesis. By binding to vitronectin receptor (alpha-V/beta-3 (ITGAV/ITGB3)), also induces apoptosis of endothelial cells by blocking their attachment to extracellular matrix proteins. Inhibits platelet aggregation induced by ADP (IC(50) is 30 nM), collagen (IC(50) is 500 nM), thrombin and epinephrin (IC(50) is 160 nM). This is Zinc metalloproteinase/disintegrin from Gloydius brevicauda (Korean slamosa snake).